A 200-amino-acid chain; its full sequence is Probable molybdenum cofactor guanylyltransferase (200 aa).

GTP contacts are provided by residues 9–11 (LAG), lysine 21, aspartate 69, and aspartate 100. Aspartate 100 serves as a coordination point for Mg(2+).

It belongs to the MobA family. Mg(2+) is required as a cofactor.

The protein resides in the cytoplasm. It catalyses the reaction Mo-molybdopterin + GTP + H(+) = Mo-molybdopterin guanine dinucleotide + diphosphate. Its function is as follows. Transfers a GMP moiety from GTP to Mo-molybdopterin (Mo-MPT) cofactor (Moco or molybdenum cofactor) to form Mo-molybdopterin guanine dinucleotide (Mo-MGD) cofactor. In Bacillus mycoides (strain KBAB4) (Bacillus weihenstephanensis), this protein is Probable molybdenum cofactor guanylyltransferase.